Consider the following 526-residue polypeptide: MPLQAIPLFSLILPVLVAGKFPIYTIPDKIGPWSPIDINHLSCPNNLVVEDEGCTTLTAFSYMELKVGYITTIKVSGFTCTGVVTEAETYTNFVGYVTTTFRRKHFRPTASACREAYNWKATGDPRYEESLHNPYPDSHWLRTVKTTKESLLIISPSVADMDAYDKALYSKIFPNGKCLGVSLSSPFCSTNHDYTLWMPENPKPGVSCDIFTTSKGKKATKDGKLCGFVDERGLYKSLKGACKLKLCGVMGLRLMDGSWVSLQKTEESEWCSPNQLINIHDFHSDEIEHMVVEELVKKREECLDALESIMTTKSISFRRLSHLRKLVPGFGKAYTLINKTLMEADAHYKSVREWTEVIPSKGCLKAGGGCYPHYNRVFFNGIILSPDGHVLIPEMQSALLQQHIELLESSVIPLRHPLADPSTVFKGDDEAEEFVEVHLPDTQKQISGIDLGLPEWKRYFLMGMSAIGFLALTIILAVCCRRIKRRKQSKPNPVELIRKVSVTSQSGRAIPSWESYKVKTGDQPQV.

A signal peptide spans 1–19; that stretch reads MPLQAIPLFSLILPVLVAG. Topologically, residues 20 to 459 are virion surface; it reads KFPIYTIPDK…DLGLPEWKRY (440 aa). Asn338 carries N-linked (GlcNAc...) asparagine; by host glycosylation. A helical transmembrane segment spans residues 460-480; that stretch reads FLMGMSAIGFLALTIILAVCC. Residue Cys480 is the site of S-palmitoyl cysteine; by host attachment. At 481–526 the chain is on the intravirion side; it reads RRIKRRKQSKPNPVELIRKVSVTSQSGRAIPSWESYKVKTGDQPQV.

It belongs to the lyssavirus glycoprotein family. Homotrimer. Interacts with matrix protein. In terms of processing, glycosylated and palmitoylated by host. Glycosylation is crucial for glycoprotein export at the cell surface.

It is found in the virion membrane. Attaches the virus to host cellular receptor, inducing endocytosis of the virion. In the endosome, the acidic pH induces conformational changes in the glycoprotein trimer, which trigger fusion between virus and cell membrane. There is convincing in vitro evidence that the muscular form of the nicotinic acetylcholine receptor (nAChR), the neuronal cell adhesion molecule (NCAM), and the p75 neurotrophin receptor (p75NTR) bind glycoprotein and thereby facilitate rabies virus entry into cells. The polypeptide is Glycoprotein (G) (Myotis blythii (Lesser mouse-eared bat)).